The primary structure comprises 397 residues: Serpin B10 (397 aa).

The Nuclear localization signal motif lies at 74–77 (KKRK).

The protein belongs to the serpin family. Ov-serpin subfamily.

The protein localises to the nucleus. The protein resides in the cytoplasm. In terms of biological role, protease inhibitor that may play a role in the regulation of protease activities during hematopoiesis and apoptosis induced by TNF. May regulate protease activities in the cytoplasm and in the nucleus. This is Serpin B10 (SERPINB10) from Rhinolophus ferrumequinum (Greater horseshoe bat).